The primary structure comprises 412 residues: L-cysteine:1D-myo-inositol 2-amino-2-deoxy-alpha-D-glucopyranoside ligase (412 aa).

Cysteine 43 lines the Zn(2+) pocket. L-cysteinyl-5'-AMP-binding positions include 43–46, threonine 58, and 81–83; these read CGIT and NVT. Positions 45 to 55 match the 'HIGH' region motif; the sequence is ITPYDATHLGH. A 'ERGGDP' region motif is present at residues 186–191; that stretch reads ERGGDP. Tryptophan 227 lines the L-cysteinyl-5'-AMP pocket. Cysteine 231 lines the Zn(2+) pocket. Residue 249–251 participates in L-cysteinyl-5'-AMP binding; the sequence is GND. Zn(2+) is bound at residue histidine 256. Isoleucine 283 is a binding site for L-cysteinyl-5'-AMP. The 'KMSKS' region motif lies at 289–293; it reads KMSKS.

This sequence belongs to the class-I aminoacyl-tRNA synthetase family. MshC subfamily. As to quaternary structure, monomer. Requires Zn(2+) as cofactor.

The catalysed reaction is 1D-myo-inositol 2-amino-2-deoxy-alpha-D-glucopyranoside + L-cysteine + ATP = 1D-myo-inositol 2-(L-cysteinylamino)-2-deoxy-alpha-D-glucopyranoside + AMP + diphosphate + H(+). Its function is as follows. Catalyzes the ATP-dependent condensation of GlcN-Ins and L-cysteine to form L-Cys-GlcN-Ins. The protein is L-cysteine:1D-myo-inositol 2-amino-2-deoxy-alpha-D-glucopyranoside ligase of Salinispora arenicola (strain CNS-205).